A 276-amino-acid polypeptide reads, in one-letter code: Mitochondrial distribution and morphology protein 12 (276 aa).

An SMP-LTD domain is found at 1–276; it reads MSIDIQWNLL…FVWPSYFTLY (276 aa). The interval 68–104 is disordered; sequence TLYSDDSSSLDDEESDREEENMTELPPYGATENGVHK. Residues 75–89 show a composition bias toward acidic residues; the sequence is SSLDDEESDREEENM.

It belongs to the MDM12 family. Component of the ER-mitochondria encounter structure (ERMES) or MDM complex, composed of mmm1, mdm10, mdm12 and mdm34. A mmm1 homodimer associates with one molecule of mdm12 on each side in a pairwise head-to-tail manner, and the SMP-LTD domains of mmm1 and mdm12 generate a continuous hydrophobic tunnel for phospholipid trafficking.

The protein localises to the mitochondrion outer membrane. Its subcellular location is the endoplasmic reticulum membrane. In terms of biological role, component of the ERMES/MDM complex, which serves as a molecular tether to connect the endoplasmic reticulum (ER) and mitochondria. Components of this complex are involved in the control of mitochondrial shape and protein biogenesis, and function in nonvesicular lipid trafficking between the ER and mitochondria. Mdm12 is required for the interaction of the ER-resident membrane protein mmm1 and the outer mitochondrial membrane-resident beta-barrel protein mdm10. The mdm12-mmm1 subcomplex functions in the major beta-barrel assembly pathway that is responsible for biogenesis of all mitochondrial outer membrane beta-barrel proteins, and acts in a late step after the SAM complex. The mdm10-mdm12-mmm1 subcomplex further acts in the TOM40-specific pathway after the action of the mdm12-mmm1 complex. Essential for establishing and maintaining the structure of mitochondria and maintenance of mtDNA nucleoids. This Schizosaccharomyces japonicus (strain yFS275 / FY16936) (Fission yeast) protein is Mitochondrial distribution and morphology protein 12.